Consider the following 103-residue polypeptide: Large ribosomal subunit protein uL24 (103 aa).

Belongs to the universal ribosomal protein uL24 family. As to quaternary structure, part of the 50S ribosomal subunit.

Its function is as follows. One of two assembly initiator proteins, it binds directly to the 5'-end of the 23S rRNA, where it nucleates assembly of the 50S subunit. In terms of biological role, one of the proteins that surrounds the polypeptide exit tunnel on the outside of the subunit. The protein is Large ribosomal subunit protein uL24 of Ruegeria pomeroyi (strain ATCC 700808 / DSM 15171 / DSS-3) (Silicibacter pomeroyi).